A 181-amino-acid polypeptide reads, in one-letter code: S-fimbrial protein subunit SfaA (181 aa).

Positions 1 to 24 (MKLKFISMAVFSALTLGVATNASA) are cleaved as a signal peptide. Cysteines 44 and 84 form a disulfide.

Belongs to the fimbrial protein family.

It localises to the fimbrium. Functionally, fimbriae (also called pili), polar filaments radiating from the surface of the bacterium to a length of 0.5-1.5 micrometers and numbering 100-300 per cell, enable bacteria to colonize the epithelium of specific host organs. Its function is as follows. The major fimbrial subunit. Interacts with alpha-sialic acid-(2-3)-beta-Gal containing receptors. It belongs to the group of Mrh (Mannose-resistant hemagglutination) fimbrial proteins. This is S-fimbrial protein subunit SfaA (sfaA) from Escherichia coli O6:K15:H31 (strain 536 / UPEC).